Consider the following 582-residue polypeptide: Formate--tetrahydrofolate ligase (582 aa).

Position 65-72 (65-72 (TPLGEGKT)) interacts with ATP.

It belongs to the formate--tetrahydrofolate ligase family.

It carries out the reaction (6S)-5,6,7,8-tetrahydrofolate + formate + ATP = (6R)-10-formyltetrahydrofolate + ADP + phosphate. It participates in one-carbon metabolism; tetrahydrofolate interconversion. The chain is Formate--tetrahydrofolate ligase from Vibrio atlanticus (strain LGP32) (Vibrio splendidus (strain Mel32)).